The primary structure comprises 579 residues: Fatty-acid amide hydrolase 1 (579 aa).

The helical transmembrane segment at 9–29 (TLSGVSGVCLACSLLSAAVVL) threads the bilayer. Residues 30-403 (RWTGRQKARG…GDFVDPCLGD (374 aa)) lie on the Cytoplasmic side of the membrane. Lys-142 acts as the Charge relay system in catalysis. Substrate-binding positions include Met-191, Ser-217, and 238–241 (IGGS). The active-site Charge relay system is the Ser-217. The active-site Acyl-ester intermediate is the Ser-241. Ser-241 carries the phosphoserine modification. An intramembrane segment occupies 404-433 (LILILRLPSWFKRLLSLLLKPLFPRLAAFL). The Cytoplasmic portion of the chain corresponds to 434–579 (NSMRPRSAEK…QLMTPQKQPS (146 aa)).

This sequence belongs to the amidase family. Homodimer. As to expression, found in neuronal cells throughout the CNS. Expressed in liver and brain, and to a lesser extent in spleen, lung, kidney and testes.

The protein localises to the endoplasmic reticulum membrane. It is found in the golgi apparatus membrane. It carries out the reaction N-(5Z,8Z,11Z,14Z-eicosatetraenoyl)-ethanolamine + H2O = ethanolamine + (5Z,8Z,11Z,14Z)-eicosatetraenoate. It catalyses the reaction (9Z)-octadecenamide + H2O = (9Z)-octadecenoate + NH4(+). The enzyme catalyses 2-(5Z,8Z,11Z,14Z-eicosatetraenoyl)-glycerol + H2O = glycerol + (5Z,8Z,11Z,14Z)-eicosatetraenoate + H(+). The catalysed reaction is (9Z,12Z,15Z)-octadecatrienamide + H2O = (9Z,12Z,15Z)-octadecatrienoate + NH4(+). It carries out the reaction (5Z,8Z,11Z,14Z)-eicosatetraenamide + H2O = (5Z,8Z,11Z,14Z)-eicosatetraenoate + NH4(+). It catalyses the reaction (6Z)-octadecenamide + H2O = (6Z)-octadecenoate + NH4(+). The enzyme catalyses (15Z)-tetracosenamide + H2O = (15Z)-tetracosenoate + NH4(+). The catalysed reaction is (8Z,11Z,14Z)-eicosatrienamide + H2O = (8Z,11Z,14Z)-eicosatrienoate + NH4(+). It carries out the reaction (11Z,14Z,17Z)-eicosatrienamide + H2O = (11Z,14Z,17Z)-eicosatrienoate + NH4(+). It catalyses the reaction (11Z,14Z)-eicosadienamide + H2O = (11Z,14Z)-eicosadienoate + NH4(+). The enzyme catalyses (9Z,12Z)-octadecadienamide + H2O = (9Z,12Z)-octadecadienoate + NH4(+). The catalysed reaction is tetradecamide + H2O = tetradecanoate + NH4(+). It carries out the reaction N-(9Z-octadecenoyl) ethanolamine + H2O = ethanolamine + (9Z)-octadecenoate. It catalyses the reaction N-(9Z-octadecenoyl)-taurine + H2O = taurine + (9Z)-octadecenoate. The enzyme catalyses 1-O-methyl-(5Z,8Z,11Z,14Z)-eicosatetraenoate + H2O = methanol + (5Z,8Z,11Z,14Z)-eicosatetraenoate + H(+). The catalysed reaction is (11Z)-eicosenamide + H2O = (11Z)-eicosenoate + NH4(+). It carries out the reaction N-(9Z-hexadecenoyl) ethanolamine + H2O = (9Z)-hexadecenoate + ethanolamine. It catalyses the reaction N-octadecanoyl ethanolamine + H2O = octadecanoate + ethanolamine. The enzyme catalyses N-docosanoyl-ethanolamine + H2O = docosanoate + ethanolamine. The catalysed reaction is N-tetracosanoyl-taurine + H2O = tetracosanoate + taurine. It carries out the reaction N-(15Z-tetracosenoyl)-ethanolamine + H2O = (15Z)-tetracosenoate + ethanolamine. It catalyses the reaction N-docosanoyl-taurine + H2O = docosanoate + taurine. The enzyme catalyses N-(15Z-tetracosenoyl)-taurine + H2O = (15Z)-tetracosenoate + taurine. The catalysed reaction is N-tricosanoyl-taurine + H2O = tricosanoate + taurine. It carries out the reaction (9Z)-octadecenoate + glycine = N-(9Z-octadecenoyl)glycine + H2O. It catalyses the reaction N-(5Z,8Z,11Z,14Z)-eicosatetraenoyl-glycine + H2O = (5Z,8Z,11Z,14Z)-eicosatetraenoate + glycine. The enzyme catalyses N-(5Z,8Z,11Z,14Z-eicosatetraenoyl)-L-serine + H2O = (5Z,8Z,11Z,14Z)-eicosatetraenoate + L-serine. Inhibited by trifluoromethyl ketone. In terms of biological role, catalyzes the hydrolysis of endogenous amidated lipids like the sleep-inducing lipid oleamide ((9Z)-octadecenamide), the endocannabinoid anandamide (N-(5Z,8Z,11Z,14Z-eicosatetraenoyl)-ethanolamine), as well as other fatty amides, to their corresponding fatty acids, thereby regulating the signaling functions of these molecules. Hydrolyzes polyunsaturated substrate anandamide preferentially as compared to monounsaturated substrates. It can also catalyze the hydrolysis of the endocannabinoid 2-arachidonoylglycerol (2-(5Z,8Z,11Z,14Z-eicosatetraenoyl)-glycerol). FAAH cooperates with PM20D1 in the hydrolysis of amino acid-conjugated fatty acids such as N-fatty acyl glycine and N-fatty acyl-L-serine, thereby acting as a physiological regulator of specific subsets of intracellular, but not of extracellular, N-fatty acyl amino acids. This is Fatty-acid amide hydrolase 1 (Faah) from Rattus norvegicus (Rat).